The sequence spans 366 residues: G-protein coupled receptor 183 (366 aa).

Residues 1-37 (MQVMRTFNQPPTSSHPTPTLNDSDTCITLYNHRGYAR) are Extracellular-facing. Asn-21 carries N-linked (GlcNAc...) asparagine glycosylation. Residues 38–63 (VLMPLFYCIVFFVGLLGNALAFHIIR) traverse the membrane as a helical segment. At 64–83 (PNVKKINSTTLYSANLVISD) the chain is on the cytoplasmic side. The helical transmembrane segment at 84-101 (ILFTLSLPLRIIYYALGF) threads the bilayer. At 102–111 (HWPLGETLCK) the chain is on the extracellular side. Cys-110 and Cys-188 are disulfide-bonded. The helical transmembrane segment at 112–133 (IVGLIFYINTYAGVNFMTCLSV) threads the bilayer. Residues 134 to 155 (DRFIAVVLPLRFARFRKVSNVR) lie on the Cytoplasmic side of the membrane. The chain crosses the membrane as a helical span at residues 156–174 (YICVGVWLLVLMQTLPLLS). Residues 175-199 (MPMTNEEPDGFITCMEYPNFEPVPN) lie on the Extracellular side of the membrane. Residues 200–222 (ISYILIGAVFLGYGVPVVTILVC) form a helical membrane-spanning segment. The Cytoplasmic segment spans residues 223 to 248 (YSILCCKLRLAAKANQLTDKSGRSQK). The chain crosses the membrane as a helical span at residues 249–272 (AIGVICCVSLVFVVCFSPYHIDLL). Topologically, residues 273 to 292 (QYMIRKLIYTPDCAELTAFQ) are extracellular. The chain crosses the membrane as a helical span at residues 293 to 317 (ISLHFTVCLMNLNSCLDPFIYFFAC). Topologically, residues 318–366 (KGYKTKVLKILKRQVSVSFSSAARTLPEGLSRDISDGNKIHLNSTRHKE) are cytoplasmic.

This sequence belongs to the G-protein coupled receptor 1 family.

Its subcellular location is the cell membrane. Its function is as follows. G-protein coupled receptor expressed in lymphocytes that acts as a chemotactic receptor for B-cells, T-cells, splenic dendritic cells, monocytes/macrophages and astrocytes. Receptor for oxysterol 7-alpha,25-dihydroxycholesterol (7-alpha,25-OHC) and other related oxysterols. Mediates cell positioning and movement of a number of cells by binding the 7-alpha,25-OHC ligand that forms a chemotactic gradient. Binding of 7-alpha,25-OHC mediates the correct localization of B-cells during humoral immune responses. The chain is G-protein coupled receptor 183 (gpr183) from Salmo salar (Atlantic salmon).